The sequence spans 671 residues: Phospholipid:diacylglycerol acyltransferase 1 (671 aa).

A disordered region spans residues Met-1–Gly-46. Residues Met-1–Cys-54 are Cytoplasmic-facing. The segment covering Glu-20–Lys-36 has biased composition (basic and acidic residues). The chain crosses the membrane as a helical span at residues Cys-55 to Met-75. Over Pro-76–Leu-671 the chain is Lumenal. The N-linked (GlcNAc...) asparagine glycan is linked to Asn-161. Ser-254 functions as the Acyl-ester intermediate in the catalytic mechanism. Residues Asn-381 and Asn-434 are each glycosylated (N-linked (GlcNAc...) asparagine). Active-site charge relay system residues include Asp-573 and His-626. Residue Asn-647 is glycosylated (N-linked (GlcNAc...) asparagine).

It belongs to the AB hydrolase superfamily. Lipase family. Ubiquitous. Highest expression in young developing seeds.

Its subcellular location is the membrane. It catalyses the reaction a glycerophospholipid + a 1,2-diacyl-sn-glycerol = a monoacylglycerophospholipid + a triacyl-sn-glycerol. It participates in glycerolipid metabolism; triacylglycerol biosynthesis. Triacylglycerol formation by an acyl-CoA independent pathway. The enzyme preferentially transfers acyl groups from the sn-2 position of a phospholipid to diacylglycerol, thus forming an sn-1-lysophospholipid. Involved in epoxy and hydroxy fatty acid accumulation in seeds. Has complementary functions with DAG1 that are essential for triacylglycerol synthesis and normal development of both seeds and pollen. This Arabidopsis thaliana (Mouse-ear cress) protein is Phospholipid:diacylglycerol acyltransferase 1 (PDAT1).